The primary structure comprises 123 residues: UPF0102 protein CLM_2733 (123 aa).

It belongs to the UPF0102 family.

The chain is UPF0102 protein CLM_2733 from Clostridium botulinum (strain Kyoto / Type A2).